Here is a 537-residue protein sequence, read N- to C-terminus: MKHSVSVTCCALLVSSISLSYAAEVPSGTVLAEKQELVRHIKDEPASLDPAKAVGLPEIQVIRDLFEGLVNQNEKGEIVPGVATQWKSNDNRIWTFTLRDNAKWADGTPVTAQDFVYSWQRLVDPKTLSPFAWFAALAGINNAQAIIDGKATPDQLGVTAVDAHTLKIQLDKPLPWFVNLTANFAFFPVQKANVESGKEWTKPGNLIGNGAYVLKERVVNEKLVVVPNTHYWDNAKTVLQKVTFLPINQESAATKRYLAGDIDITESFPKNMYQKLLKDIPGQVYTPPQLGTYYYAFNTQKGPTADQRVRLALSMTIDRRLMTEKVLGTGEKPAWHFTPDVTAGFTPEPSPFEQMSQEELNAQAKTLLSAAGYGPQKPLKLTLLYNTSENHQKIAIAVASMWKKNLGVDVKLQNQEWKTYIDSRNTGNFDVIRASWVGDYNEPSTFLTLLTSTHSGNISRFNNPAYDKVLAQASTENTVKARNADYNAAEKILMEQAPIAPIYQYTNGRLIKPWLKGYPINNPEDVAYSRTMYIVKH.

The N-terminal stretch at 1–22 is a signal peptide; that stretch reads MKHSVSVTCCALLVSSISLSYA. The L-alanyl-gamma-D-glutamyl-meso-2,6-diaminopimelate site is built by Lys42, Val54, Leu56, Gln289, Arg424, Ser435, Val437, Asp439, and Thr506.

It belongs to the bacterial solute-binding protein 5 family. In terms of assembly, the complex is composed of two ATP-binding proteins (OppD and OppF), two transmembrane proteins (OppB and OppC) and a solute-binding protein (MppA).

The protein localises to the periplasm. Functionally, part of the ABC transporter complex MppA-OppBCDF involved in the uptake of the cell wall murein tripeptide L-alanyl-gamma-D-glutamyl-meso-diaminopimelate. Is involved in the recycling of cell wall peptides. Binds the cell wall peptide L-Ala-D-Gly-gamma-meso-diaminopimelic acid. Can also transport ordinary alpha-linked tripeptides such as Pro-Phe-Lys, but with much lower efficiency than OppA. Cannot bind typical tripeptides such as Lys-Glu-Lys, Lys-Lys-Lys or Ala-Ala-Ala. The sequence is that of Periplasmic murein peptide-binding protein MppA from Escherichia coli (strain K12).